The chain runs to 216 residues: Putative transmembrane protein RNF32-DT (216 aa).

A helical transmembrane segment spans residues 177-197 (WIPLLLVAGCVSCFVGLAVCV).

Expressed only in testis.

It localises to the cytoplasm. The protein localises to the membrane. The protein is Putative transmembrane protein RNF32-DT of Homo sapiens (Human).